A 221-amino-acid chain; its full sequence is Octanoyltransferase (221 aa).

A BPL/LPL catalytic domain is found at Gly-31–Pro-216. Residues Arg-76–His-83, Ala-145–Gly-147, and Gly-159–Ala-161 each bind substrate. Residue Cys-177 is the Acyl-thioester intermediate of the active site.

The protein belongs to the LipB family.

It is found in the cytoplasm. The enzyme catalyses octanoyl-[ACP] + L-lysyl-[protein] = N(6)-octanoyl-L-lysyl-[protein] + holo-[ACP] + H(+). The protein operates within protein modification; protein lipoylation via endogenous pathway; protein N(6)-(lipoyl)lysine from octanoyl-[acyl-carrier-protein]: step 1/2. Catalyzes the transfer of endogenously produced octanoic acid from octanoyl-acyl-carrier-protein onto the lipoyl domains of lipoate-dependent enzymes. Lipoyl-ACP can also act as a substrate although octanoyl-ACP is likely to be the physiological substrate. The chain is Octanoyltransferase from Chloroflexus aggregans (strain MD-66 / DSM 9485).